Consider the following 354-residue polypeptide: 3-isopropylmalate dehydrogenase (354 aa).

Positions 96, 106, 132, and 223 each coordinate substrate. Positions 223, 247, and 251 each coordinate Mg(2+). 283 to 295 (GSAPDIAGQGKAD) is a binding site for NAD(+).

Belongs to the isocitrate and isopropylmalate dehydrogenases family. LeuB type 2 subfamily. In terms of assembly, homodimer. Mg(2+) is required as a cofactor. The cofactor is Mn(2+).

It localises to the cytoplasm. It carries out the reaction (2R,3S)-3-isopropylmalate + NAD(+) = 4-methyl-2-oxopentanoate + CO2 + NADH. It participates in amino-acid biosynthesis; L-leucine biosynthesis; L-leucine from 3-methyl-2-oxobutanoate: step 3/4. Functionally, catalyzes the oxidation of 3-carboxy-2-hydroxy-4-methylpentanoate (3-isopropylmalate) to 3-carboxy-4-methyl-2-oxopentanoate. The product decarboxylates to 4-methyl-2 oxopentanoate. The polypeptide is 3-isopropylmalate dehydrogenase (Thermobifida fusca (strain YX)).